The sequence spans 315 residues: Porphobilinogen deaminase (315 aa).

Cys-241 is subject to S-(dipyrrolylmethanemethyl)cysteine.

It belongs to the HMBS family. In terms of assembly, monomer. Dipyrromethane serves as cofactor.

It carries out the reaction 4 porphobilinogen + H2O = hydroxymethylbilane + 4 NH4(+). The protein operates within porphyrin-containing compound metabolism; protoporphyrin-IX biosynthesis; coproporphyrinogen-III from 5-aminolevulinate: step 2/4. Its function is as follows. Tetrapolymerization of the monopyrrole PBG into the hydroxymethylbilane pre-uroporphyrinogen in several discrete steps. In Nitratidesulfovibrio vulgaris (strain DP4) (Desulfovibrio vulgaris), this protein is Porphobilinogen deaminase.